A 481-amino-acid polypeptide reads, in one-letter code: Glutamate--tRNA ligase (481 aa).

The short motif at 11 to 21 is the 'HIGH' region element; that stretch reads PSPTGLLHIGN. The 'KMSKS' region motif lies at 255–259; it reads KLSKR. Lysine 258 contributes to the ATP binding site.

The protein belongs to the class-I aminoacyl-tRNA synthetase family. Glutamate--tRNA ligase type 1 subfamily. As to quaternary structure, monomer.

Its subcellular location is the cytoplasm. The catalysed reaction is tRNA(Glu) + L-glutamate + ATP = L-glutamyl-tRNA(Glu) + AMP + diphosphate. Its function is as follows. Catalyzes the attachment of glutamate to tRNA(Glu) in a two-step reaction: glutamate is first activated by ATP to form Glu-AMP and then transferred to the acceptor end of tRNA(Glu). The polypeptide is Glutamate--tRNA ligase (Streptococcus pyogenes serotype M6 (strain ATCC BAA-946 / MGAS10394)).